Here is a 179-residue protein sequence, read N- to C-terminus: Large ribosomal subunit protein uL6 (179 aa).

Belongs to the universal ribosomal protein uL6 family. In terms of assembly, part of the 50S ribosomal subunit.

Functionally, this protein binds to the 23S rRNA, and is important in its secondary structure. It is located near the subunit interface in the base of the L7/L12 stalk, and near the tRNA binding site of the peptidyltransferase center. In Syntrophomonas wolfei subsp. wolfei (strain DSM 2245B / Goettingen), this protein is Large ribosomal subunit protein uL6.